The chain runs to 104 residues: Iron-sulfur cluster assembly protein CyaY (104 aa).

The protein belongs to the frataxin family.

Its function is as follows. Involved in iron-sulfur (Fe-S) cluster assembly. May act as a regulator of Fe-S biogenesis. This is Iron-sulfur cluster assembly protein CyaY from Aliivibrio fischeri (strain ATCC 700601 / ES114) (Vibrio fischeri).